Here is a 197-residue protein sequence, read N- to C-terminus: Glycerol-3-phosphate acyltransferase (197 aa).

A run of 4 helical transmembrane segments spans residues 1 to 21, 78 to 98, 112 to 132, and 155 to 175; these read MNFL…FAIV, PVEA…SVFL, VLAG…LAVA, and VLLG…ILVW.

Belongs to the PlsY family. As to quaternary structure, probably interacts with PlsX.

The protein resides in the cell inner membrane. The catalysed reaction is an acyl phosphate + sn-glycerol 3-phosphate = a 1-acyl-sn-glycero-3-phosphate + phosphate. The protein operates within lipid metabolism; phospholipid metabolism. Functionally, catalyzes the transfer of an acyl group from acyl-phosphate (acyl-PO(4)) to glycerol-3-phosphate (G3P) to form lysophosphatidic acid (LPA). This enzyme utilizes acyl-phosphate as fatty acyl donor, but not acyl-CoA or acyl-ACP. The sequence is that of Glycerol-3-phosphate acyltransferase from Aromatoleum aromaticum (strain DSM 19018 / LMG 30748 / EbN1) (Azoarcus sp. (strain EbN1)).